A 565-amino-acid chain; its full sequence is Efflux pump aunC (565 aa).

Over residues 1 to 14 (MSDTARISGGSFTS) the composition is skewed to polar residues. Positions 1 to 57 (MSDTARISGGSFTSPPGRDVELNSFKEASQTRLYPYSSRKEEEGREDEQQRPEREED) are disordered. Residues 38-54 (SRKEEEGREDEQQRPER) are compositionally biased toward basic and acidic residues. The next 14 helical transmembrane spans lie at 59 to 79 (GALT…CIFC), 103 to 123 (DVGW…LPFG), 128 to 148 (FFPI…GSFI), 164 to 184 (VAGL…TQCV), 194 to 214 (GFIM…GGAF), 222 to 242 (WCFY…FFTF), 257 to 277 (AAGL…CLLL), 293 to 313 (IIAL…LQLW), 335 to 355 (LYGF…PIWF), 378 to 398 (VIFA…GPFM), 399 to 419 (LLSA…HPSS), 425 to 445 (IGYQ…PVFV), 457 to 477 (TATA…VSVA), and 530 to 550 (VHTF…ATVI).

This sequence belongs to the major facilitator superfamily. TCR/Tet family.

The protein resides in the cell membrane. Its function is as follows. Efflux pump; part of the gene cluster that mediates the biosynthesis of aurasperone B, a dimeric gamma-naphthopyrone. The chain is Efflux pump aunC from Aspergillus niger (strain ATCC MYA-4892 / CBS 513.88 / FGSC A1513).